A 232-amino-acid chain; its full sequence is Protein Mis18-alpha (232 aa).

Phosphoserine is present on residues S36, S39, and S40. One can recognise a Mis18 domain in the interval 79–177 (PLVFLCSGCR…SVEAIESYVL (99 aa)). The Zn(2+) site is built by C84, C87, C140, and C143. K161 is covalently cross-linked (Glycyl lysine isopeptide (Lys-Gly) (interchain with G-Cter in SUMO2)). S232 is modified (phosphoserine).

It belongs to the mis18 family. Homodimer, and heterodimer with OIP5/MIS18B. Identified in a complex containing MIS18A, OIP5/MIS18B, MIS18BP1, RBBP7 and RBBP4.

Its subcellular location is the nucleus. The protein localises to the chromosome. It is found in the centromere. In terms of biological role, required for recruitment of CENPA to centromeres and normal chromosome segregation during mitosis. The protein is Protein Mis18-alpha (MIS18A) of Pan troglodytes (Chimpanzee).